A 123-amino-acid chain; its full sequence is uncharacterized protein (123 aa).

2 disordered regions span residues 1–33 (MAPPGGKINRPRTELKKKLFKRRRVLSRDRRRK) and 82–123 (EKAA…EDKS). Basic residues predominate over residues 18 to 33 (KLFKRRRVLSRDRRRK).

This is an uncharacterized protein from Mus musculus (Mouse).